Reading from the N-terminus, the 290-residue chain is 4-hydroxybenzoate octaprenyltransferase (290 aa).

The next 8 membrane-spanning stretches (helical) occupy residues I21 to M41, L44 to I64, L97 to V117, F143 to V163, W168 to V188, E211 to G231, L235 to I255, and N270 to L290.

This sequence belongs to the UbiA prenyltransferase family. It depends on Mg(2+) as a cofactor.

It is found in the cell inner membrane. The enzyme catalyses all-trans-octaprenyl diphosphate + 4-hydroxybenzoate = 4-hydroxy-3-(all-trans-octaprenyl)benzoate + diphosphate. Its pathway is cofactor biosynthesis; ubiquinone biosynthesis. Its function is as follows. Catalyzes the prenylation of para-hydroxybenzoate (PHB) with an all-trans polyprenyl group. Mediates the second step in the final reaction sequence of ubiquinone-8 (UQ-8) biosynthesis, which is the condensation of the polyisoprenoid side chain with PHB, generating the first membrane-bound Q intermediate 3-octaprenyl-4-hydroxybenzoate. In Shewanella amazonensis (strain ATCC BAA-1098 / SB2B), this protein is 4-hydroxybenzoate octaprenyltransferase.